A 79-amino-acid polypeptide reads, in one-letter code: Sperm-specific basic nuclear protein SP4 (79 aa).

Residues 1-79 (MSKVSGGSRR…ARDYGSDYRS (79 aa)) form a disordered region. A compositionally biased stretch (basic residues) spans 9 to 60 (RRTRARRPMSNRRGRRSQSAAHRSRAQRRRRRTGTTRRARTSTARRARTRTA). 2 repeats span residues 45 to 52 (RRARTSTA) and 53 to 60 (RRARTRTA). Positions 61–79 (RRSDLTRMMARDYGSDYRS) are enriched in basic and acidic residues.

The protein localises to the nucleus. The sequence is that of Sperm-specific basic nuclear protein SP4 (sp4-a) from Xenopus laevis (African clawed frog).